Here is a 424-residue protein sequence, read N- to C-terminus: CinA-like protein (424 aa).

Belongs to the CinA family.

This Nostoc sp. (strain PCC 7120 / SAG 25.82 / UTEX 2576) protein is CinA-like protein.